Consider the following 306-residue polypeptide: Abnormal cell migration protein 21 (306 aa).

2 consecutive TSP type-1 domains span residues 55 to 102 (PGGW…AISS) and 109 to 155 (FGSW…DECP). Trp-58 and Trp-61 each carry a C-linked (Man) tryptophan glycan. Cystine bridges form between Cys-121/Cys-149, Cys-123/Cys-154, and Cys-134/Cys-139. Residues 240 to 260 (CLPLHFAIPIFCFCILTGFLL) form a helical membrane-spanning segment.

Glycosylated via C-mannosylation by dpy-19 at Trp-58 and Trp-61.

The protein localises to the membrane. Functionally, required for determination of left/right asymmetry in nervous system. Acts together with unc-40 to control an initial left-right asymmetric polarization of the Q neuroblasts. Mig-21 and unc-40 may control the asymmetry in Wnt signaling response by restricting posterior polarization to one of the 2 Q neuroblasts. Involved in left-side QL posterior migration. In right-side QR, unc-40 and mig-21 pathways mutually inhibit each other in posterior migration, allowing anterior QR migration. The sequence is that of Abnormal cell migration protein 21 (mig-21) from Caenorhabditis elegans.